Here is a 153-residue protein sequence, read N- to C-terminus: Large ribosomal subunit protein bL27m (153 aa).

The transit peptide at 1–37 (MINQGLFIRVNNFQLLKASLAYKKASNILTFPPIRTS) directs the protein to the mitochondrion. A disordered region spans residues 34-57 (IRTSTKHGGGSSKNTGDSAGRRLG).

It belongs to the bacterial ribosomal protein bL27 family. As to quaternary structure, component of the mitochondrial large ribosomal subunit (mt-LSU). Mature yeast 74S mitochondrial ribosomes consist of a small (37S) and a large (54S) subunit. The 37S small subunit contains a 15S ribosomal RNA (15S mt-rRNA) and at least 32 different proteins. The 54S large subunit contains a 21S rRNA (21S mt-rRNA) and at least 45 different proteins.

The protein localises to the mitochondrion. Its function is as follows. Component of the mitochondrial ribosome (mitoribosome), a dedicated translation machinery responsible for the synthesis of mitochondrial genome-encoded proteins, including at least some of the essential transmembrane subunits of the mitochondrial respiratory chain. The mitoribosomes are attached to the mitochondrial inner membrane and translation products are cotranslationally integrated into the membrane. This is Large ribosomal subunit protein bL27m (mrp7) from Schizosaccharomyces pombe (strain 972 / ATCC 24843) (Fission yeast).